Consider the following 1003-residue polypeptide: Helicase-like transcription factor (1003 aa).

Residue arginine 27 is modified to Omega-N-methylarginine. Residues 38–287 (EFQDIIPPDD…FSVKERPENV (250 aa)) form a DNA-binding region. Lysine 112 is covalently cross-linked (Glycyl lysine isopeptide (Lys-Gly) (interchain with G-Cter in SUMO2)). Tyrosine 195 bears the Phosphotyrosine; by JAK2 mark. Lysine 211 is covalently cross-linked (Glycyl lysine isopeptide (Lys-Gly) (interchain with G-Cter in SUMO2)). Residue 294–301 (DDMGLGKT) coordinates ATP. The tract at residues 317 to 373 (PLLSKRGKKNHPGKEYKDETIKRRGSNMDKKEDGHSESSTCGEEPSISGTPEKSSCT) is disordered. Basic and acidic residues predominate over residues 328-352 (PGKEYKDETIKRRGSNMDKKEDGHS). Residues 353–373 (ESSTCGEEPSISGTPEKSSCT) show a composition bias toward polar residues. Residues serine 394, serine 395, and serine 397 each carry the phosphoserine modification. A Helicase ATP-binding domain is found at 433–600 (DSKFALTFFA…WSLLSFLKLK (168 aa)). The DEGH box signature appears at 551-554 (DEGH). At threonine 730 the chain carries Phosphothreonine. An RING-type zinc finger spans residues 754 to 795 (CAICLDSLTFPVITHCAHVFCKPCICQVIHSEQPHAKCPLCR). Positions 831–990 (ALMHALIELR…TKKTDANDMK (160 aa)) constitute a Helicase C-terminal domain. An interaction with SP1 and SP3 region spans residues 919–1003 (SRVFLMDPAW…INEIRTLIDL (85 aa)).

It belongs to the SNF2/RAD54 helicase family. RAD16 subfamily. In terms of assembly, interacts with SP1 and SP3 independently of DNA; the interaction with these transcriptional factors may be required for basal transcription of target genes. Interacts with EGR1; the interaction requires prior binding to DNA and represses c-Rel via a DNA looping mechanism. Interacts with GATA4. Interacts with PCNA; the interaction promotes polyubiquitination of PCNA through association with the UBE2B-RAD18 and UBE2V2-UBE2N ubiquitin ligase complexes. Interacts with RAD18, SHPRH, UBE2V2 and UBE2N. As to expression, expressed in brain, heart, kidney, liver, lung, pancreas, placenta and skeletal muscle.

It localises to the cytoplasm. It is found in the nucleus. The protein localises to the nucleolus. Its subcellular location is the nucleoplasm. It catalyses the reaction S-ubiquitinyl-[E2 ubiquitin-conjugating enzyme]-L-cysteine + [acceptor protein]-L-lysine = [E2 ubiquitin-conjugating enzyme]-L-cysteine + N(6)-ubiquitinyl-[acceptor protein]-L-lysine.. It functions in the pathway protein modification; protein ubiquitination. Its function is as follows. Has both helicase and E3 ubiquitin ligase activities. Possesses intrinsic ATP-dependent nucleosome-remodeling activity. This activity may be required for transcriptional activation or repression of specific target promoters. These may include the SERPINE1, to which this protein can bind directly. Plays a role in error-free postreplication repair (PRR) of damaged DNA and maintains genomic stability through acting as a ubiquitin ligase for 'Lys-63'-linked polyubiquitination of chromatin-bound PCNA. This Mus musculus (Mouse) protein is Helicase-like transcription factor (Hltf).